The chain runs to 1050 residues: Sucrose-phosphate synthase 4 (1050 aa).

The tract at residues 134–167 is disordered; it reads QGRNDAEEDLLSELSEGEKDKNDGEKEKSEVVTT. The residue at position 148 (serine 148) is a Phosphoserine. Over residues 149-163 the composition is skewed to basic and acidic residues; sequence EGEKDKNDGEKEKSE. Residue serine 180 is modified to Phosphoserine.

The protein belongs to the glycosyltransferase 1 family. Homodimer or homotetramer.

The enzyme catalyses beta-D-fructose 6-phosphate + UDP-alpha-D-glucose = sucrose 6(F)-phosphate + UDP + H(+). It participates in glycan biosynthesis; sucrose biosynthesis; sucrose from D-fructose 6-phosphate and UDP-alpha-D-glucose: step 1/2. Activity is regulated by phosphorylation and moderated by concentration of metabolites and light. Its function is as follows. Plays a role in photosynthetic sucrose synthesis by catalyzing the rate-limiting step of sucrose biosynthesis from UDP-glucose and fructose- 6-phosphate. Involved in the regulation of carbon partitioning in the leaves of plants. May regulate the synthesis of sucrose and therefore play a major role as a limiting factor in the export of photoassimilates out of the leaf. Plays a role for sucrose availability that is essential for plant growth and fiber elongation. The protein is Sucrose-phosphate synthase 4 of Arabidopsis thaliana (Mouse-ear cress).